A 392-amino-acid polypeptide reads, in one-letter code: L-rhamnonate dehydratase (392 aa).

Positions 22 and 48 each coordinate substrate. Mg(2+) contacts are provided by D214, E240, and E268. Residue H318 is the Proton acceptor of the active site. E338 provides a ligand contact to substrate.

This sequence belongs to the mandelate racemase/muconate lactonizing enzyme family. RhamD subfamily. In terms of assembly, homooctamer; tetramer of dimers. Mg(2+) serves as cofactor.

The catalysed reaction is L-rhamnonate = 2-dehydro-3-deoxy-L-rhamnonate + H2O. Functionally, catalyzes the dehydration of L-rhamnonate to 2-keto-3-deoxy-L-rhamnonate (KDR). The sequence is that of L-rhamnonate dehydratase from Burkholderia ambifaria (strain MC40-6).